The chain runs to 414 residues: Arginine deiminase (414 aa).

Residue Cys-402 is the Amidino-cysteine intermediate of the active site.

This sequence belongs to the arginine deiminase family.

The protein localises to the cytoplasm. It catalyses the reaction L-arginine + H2O = L-citrulline + NH4(+). It functions in the pathway amino-acid degradation; L-arginine degradation via ADI pathway; carbamoyl phosphate from L-arginine: step 1/2. The protein is Arginine deiminase of Oenococcus oeni (strain ATCC BAA-331 / PSU-1).